A 264-amino-acid chain; its full sequence is MALVVKGKVNINEFIDLSKSEKLLPSMFTPVKSVMVSKVDKIMVHKNESLSEVNLLKGVKLIEGGYVWLVGLVVSGEWNLPDNCRGGVSVCMVDKRMERADEATLGSYYTAAAKKRFQFKVVPNYGITTKDAKKNIWQVLVNIKNVKMSAGYCPLSLEFVSVCIVYKNNIKLGLREKVTSVKDGGPMELSEEVVDEFMENVPMSVRLAKFRTKPSKRGPKNNNNLGKGRSGGRPKPKSFDEVEKEFDNLIEDEAETSVADSDSY.

Basic residues predominate over residues 210 to 219; sequence FRTKPSKRGP. Residues 210-264 form a disordered region; that stretch reads FRTKPSKRGPKNNNNLGKGRSGGRPKPKSFDEVEKEFDNLIEDEAETSVADSDSY. Residues 237 to 247 are compositionally biased toward basic and acidic residues; the sequence is KSFDEVEKEFD.

This sequence belongs to the tobamovirus movement protein family. In terms of assembly, binds to host RBCS at the plasmodesmata; this interaction seems required for viral systemic movement. In resistant plants, interacts with host MBP2C at host microtubules; this interaction prevents virus cell to cell movement. In resistant plants, interacts with host resistance (R) protein (e.g. tomato ToMV resistance protein TM-2(2), AC Q71BG9) at the host plasma membrane; this interaction triggers host defense responses leading to programmed cell death.

It localises to the host cytoplasm. It is found in the host cytoskeleton. The protein resides in the host cell junction. Its subcellular location is the host plasmodesma. Transports viral genome to neighboring plant cells directly through plasmosdesmata, without any budding. The movement protein allows efficient cell to cell propagation, by bypassing the host cell wall barrier. Forms a ribonucleoprotein complex with viral RNA. Binds microtubules and modulates microtubule stability. Can bind double-stranded DNA. Triggers host hypersensitive defense reaction in incompatible plants harboring resistance (R) proteins. This chain is Movement protein (MP), found in Tomato mosaic virus (strain LII) (ToMV).